We begin with the raw amino-acid sequence, 154 residues long: Protein X (154 aa).

Residues proline 68–phenylalanine 117 form a mitochondrial targeting sequence region.

This sequence belongs to the orthohepadnavirus protein X family. As to quaternary structure, may form homodimer. May interact with host CEBPA, CFLAR, CREB1, DDB1, E4F1, HBXIP, HSPD1/HSP60, NFKBIA, POLR2E and SMAD4. Interacts with host SMC5-SMC6 complex and induces its degradation. Interacts with host TRPC4AP; leading to prevent ubiquitination of TRPC4AP. Interacts with host PLSCR1; this interaction promotes ubiquitination and degradation of HBx and impairs HBx-mediated cell proliferation. Post-translationally, a fraction may be phosphorylated in insect cells and HepG2 cells, a human hepatoblastoma cell line. Phosphorylated in vitro by host protein kinase C or mitogen-activated protein kinase. N-acetylated in insect cells.

It localises to the host cytoplasm. The protein localises to the host nucleus. Its subcellular location is the host mitochondrion. In terms of biological role, multifunctional protein that plays a role in silencing host antiviral defenses and promoting viral transcription. Does not seem to be essential for HBV infection. May be directly involved in development of cirrhosis and liver cancer (hepatocellular carcinoma). Most of cytosolic activities involve modulation of cytosolic calcium. The effect on apoptosis is controversial depending on the cell types in which the studies have been conducted. May induce apoptosis by localizing in mitochondria and causing loss of mitochondrial membrane potential. May also modulate apoptosis by binding host CFLAR, a key regulator of the death-inducing signaling complex (DISC). Promotes viral transcription by using the host E3 ubiquitin ligase DDB1 to target the SMC5-SMC6 complex to proteasomal degradation. This host complex would otherwise bind to viral episomal DNA, and prevents its transcription. Moderately stimulates transcription of many different viral and cellular transcription elements. Promoters and enhancers stimulated by HBx contain DNA binding sites for NF-kappa-B, AP-1, AP-2, c-EBP, ATF/CREB, or the calcium-activated factor NF-AT. In Hepatitis B virus genotype C subtype ayw (isolate China/Tibet127/2002) (HBV-C), this protein is Protein X.